Consider the following 262-residue polypeptide: Ribosomal RNA small subunit methyltransferase A (262 aa).

The S-adenosyl-L-methionine site is built by asparagine 14, leucine 16, glycine 41, glutamate 62, aspartate 87, and asparagine 109.

It belongs to the class I-like SAM-binding methyltransferase superfamily. rRNA adenine N(6)-methyltransferase family. RsmA subfamily.

It is found in the cytoplasm. It carries out the reaction adenosine(1518)/adenosine(1519) in 16S rRNA + 4 S-adenosyl-L-methionine = N(6)-dimethyladenosine(1518)/N(6)-dimethyladenosine(1519) in 16S rRNA + 4 S-adenosyl-L-homocysteine + 4 H(+). Functionally, specifically dimethylates two adjacent adenosines (A1518 and A1519) in the loop of a conserved hairpin near the 3'-end of 16S rRNA in the 30S particle. May play a critical role in biogenesis of 30S subunits. This is Ribosomal RNA small subunit methyltransferase A from Francisella tularensis subsp. holarctica (strain FTNF002-00 / FTA).